Here is a 58-residue protein sequence, read N- to C-terminus: Pepsin-1 (58 aa).

The propeptide at 1–41 is activation peptide; it reads LLQVPLEKGQSAREYLQEQGLWEQYRLKYPYNPMAKFDPSF.

It belongs to the peptidase A1 family.

The chain is Pepsin-1 from Thunnus orientalis (North Pacific bluefin tuna).